The sequence spans 414 residues: Histidine--tRNA ligase (414 aa).

The protein belongs to the class-II aminoacyl-tRNA synthetase family. Homodimer.

The protein resides in the cytoplasm. It catalyses the reaction tRNA(His) + L-histidine + ATP = L-histidyl-tRNA(His) + AMP + diphosphate + H(+). This chain is Histidine--tRNA ligase, found in Rickettsia rickettsii (strain Iowa).